A 397-amino-acid chain; its full sequence is MSEATIDSMLKDLPFPSNILNTLREDVLKAGVSKKEMEEIIEKMMEEYATSCIEPCDAAGVVAAQSIGEPGTQMTMRTFHYAGVAEINVTLGLPRLIEIVDARKIPSTPMMTIALSKEHPEDYAYDREKTRALAWEIEATKIDHIADVTTDLSQMKLIIDLHEKAMEGRNITIDQVKEKFNEELNVLVSISPDIDNQIVITPGEPSYRELLQLAKSIHNVTLKGIEGIKRVVVRKEGEEYTLYTEGSALRDVLQFEGVDKTRTSTNNINEIYEVLGIEAARNAIIKEATDTLREQGLTVDIRHIMLVADLMTCDGEVKQIGRHGISGEKASVFARAAFEVTVNHLLDAGMRGDVDQLQGVTENIIVGQPIRMGTGDVHLISRRVEKVEAKELEAEEE.

This sequence belongs to the RNA polymerase beta' chain family. Part of the RNA polymerase complex.

It localises to the cytoplasm. It carries out the reaction RNA(n) + a ribonucleoside 5'-triphosphate = RNA(n+1) + diphosphate. In terms of biological role, DNA-dependent RNA polymerase (RNAP) catalyzes the transcription of DNA into RNA using the four ribonucleoside triphosphates as substrates. Forms part of the jaw domain. The protein is DNA-directed RNA polymerase subunit Rpo1C of Methanosarcina acetivorans (strain ATCC 35395 / DSM 2834 / JCM 12185 / C2A).